Here is a 144-residue protein sequence, read N- to C-terminus: UPF0102 protein BMA2801 (144 aa).

The interval 1 to 28 (MCHAREASPGTGEPEAAPRDNFPRAAGS) is disordered.

This sequence belongs to the UPF0102 family.

The chain is UPF0102 protein BMA2801 from Burkholderia mallei (strain ATCC 23344).